The primary structure comprises 488 residues: Probable cytosol aminopeptidase (488 aa).

Mn(2+) is bound by residues Lys-254 and Asp-259. Lys-266 is a catalytic residue. Asp-277, Asp-336, and Glu-338 together coordinate Mn(2+). Arg-340 is an active-site residue.

It belongs to the peptidase M17 family. Requires Mn(2+) as cofactor.

Its subcellular location is the cytoplasm. It catalyses the reaction Release of an N-terminal amino acid, Xaa-|-Yaa-, in which Xaa is preferably Leu, but may be other amino acids including Pro although not Arg or Lys, and Yaa may be Pro. Amino acid amides and methyl esters are also readily hydrolyzed, but rates on arylamides are exceedingly low.. The enzyme catalyses Release of an N-terminal amino acid, preferentially leucine, but not glutamic or aspartic acids.. Presumably involved in the processing and regular turnover of intracellular proteins. Catalyzes the removal of unsubstituted N-terminal amino acids from various peptides. In Roseiflexus castenholzii (strain DSM 13941 / HLO8), this protein is Probable cytosol aminopeptidase.